The chain runs to 451 residues: UPF0210 protein LMOf2365_0563 (451 aa).

This sequence belongs to the UPF0210 family. In terms of assembly, homodimer.

The protein is UPF0210 protein LMOf2365_0563 of Listeria monocytogenes serotype 4b (strain F2365).